Here is a 413-residue protein sequence, read N- to C-terminus: Probable tRNA pseudouridine synthase D (413 aa).

D97 (nucleophile) is an active-site residue. Residues 167-370 enclose the TRUD domain; the sequence is AAPNYYGYQR…YGTYRRVRLE (204 aa).

The protein belongs to the pseudouridine synthase TruD family.

The catalysed reaction is uridine(13) in tRNA = pseudouridine(13) in tRNA. Its function is as follows. Could be responsible for synthesis of pseudouridine from uracil-13 in transfer RNAs. In Pyrobaculum aerophilum (strain ATCC 51768 / DSM 7523 / JCM 9630 / CIP 104966 / NBRC 100827 / IM2), this protein is Probable tRNA pseudouridine synthase D.